The sequence spans 314 residues: L-lactate dehydrogenase (314 aa).

NAD(+) is bound by residues valine 16, aspartate 37, lysine 42, tyrosine 68, and 82 to 83 (GV). Substrate is bound by residues glutamine 85 and arginine 91. NAD(+) is bound by residues serine 104, 121 to 123 (ASN), and threonine 146. Position 123–126 (123–126 (NPVD)) interacts with substrate. Position 151-154 (151-154 (DTTR)) interacts with substrate. The beta-D-fructose 1,6-bisphosphate site is built by arginine 156 and histidine 171. Histidine 178 (proton acceptor) is an active-site residue. At tyrosine 223 the chain carries Phosphotyrosine. Threonine 232 lines the substrate pocket.

It belongs to the LDH/MDH superfamily. LDH family. In terms of assembly, homotetramer.

The protein localises to the cytoplasm. The enzyme catalyses (S)-lactate + NAD(+) = pyruvate + NADH + H(+). It functions in the pathway fermentation; pyruvate fermentation to lactate; (S)-lactate from pyruvate: step 1/1. Allosterically activated by fructose 1,6-bisphosphate (FBP). Functionally, catalyzes the conversion of lactate to pyruvate. The protein is L-lactate dehydrogenase of Lactococcus lactis subsp. cremoris (strain MG1363).